Reading from the N-terminus, the 343-residue chain is Protein RecA (343 aa).

Residue 64–71 (GPESSGKT) participates in ATP binding.

It belongs to the RecA family.

The protein resides in the cytoplasm. Functionally, can catalyze the hydrolysis of ATP in the presence of single-stranded DNA, the ATP-dependent uptake of single-stranded DNA by duplex DNA, and the ATP-dependent hybridization of homologous single-stranded DNAs. It interacts with LexA causing its activation and leading to its autocatalytic cleavage. The chain is Protein RecA from Cereibacter sphaeroides (strain ATCC 17023 / DSM 158 / JCM 6121 / CCUG 31486 / LMG 2827 / NBRC 12203 / NCIMB 8253 / ATH 2.4.1.) (Rhodobacter sphaeroides).